A 505-amino-acid polypeptide reads, in one-letter code: Deoxyguanosinetriphosphate triphosphohydrolase (505 aa).

Positions 66 to 273 (RLTHSMEVQQ…MEAADDISYC (208 aa)) constitute an HD domain.

This sequence belongs to the dGTPase family. Type 1 subfamily. In terms of assembly, homotetramer. Mg(2+) serves as cofactor.

It carries out the reaction dGTP + H2O = 2'-deoxyguanosine + triphosphate + H(+). Functionally, dGTPase preferentially hydrolyzes dGTP over the other canonical NTPs. The polypeptide is Deoxyguanosinetriphosphate triphosphohydrolase (Salmonella paratyphi A (strain AKU_12601)).